The chain runs to 195 residues: Imidazoleglycerol-phosphate dehydratase (195 aa).

This sequence belongs to the imidazoleglycerol-phosphate dehydratase family.

The protein resides in the cytoplasm. It catalyses the reaction D-erythro-1-(imidazol-4-yl)glycerol 3-phosphate = 3-(imidazol-4-yl)-2-oxopropyl phosphate + H2O. It functions in the pathway amino-acid biosynthesis; L-histidine biosynthesis; L-histidine from 5-phospho-alpha-D-ribose 1-diphosphate: step 6/9. The chain is Imidazoleglycerol-phosphate dehydratase from Burkholderia lata (strain ATCC 17760 / DSM 23089 / LMG 22485 / NCIMB 9086 / R18194 / 383).